A 166-amino-acid chain; its full sequence is Phospholipase A2 inhibitor clone 11 (166 aa).

The signal sequence occupies residues 1-19 (MRLILLSGLLLLGIFLANG). A C-type lectin domain is found at 46–161 (LKGSFLIVHK…CDDNLLVVCE (116 aa)). 2 disulfides stabilise this stretch: C83/C160 and C138/C152. The N-linked (GlcNAc...) asparagine glycan is linked to N122.

It belongs to the alpha-type phospholipase A2 inhibitor family. In terms of assembly, homotrimer; non-covalently linked. As to expression, expressed by the liver.

The protein localises to the secreted. Its function is as follows. This phospholipase A2 inhibitor binds directly phospholipase A2 in the presence or absence of calcium. This is Phospholipase A2 inhibitor clone 11 from Bothrops neuwiedi (Neuwied's lancehead).